The sequence spans 295 residues: MTPSTEALPTAVKAQVLAEALPWLKQLHGKIVVIKYGGNAMTDDTLRRAFAADMAFLRNCGIHPVVVHGGGPQITAMLRRLGIPGDFKGGFRVTTPEVLDVARMVLFGQVGRELVNLINAHGPYAVGITGEDAQLFTAVRRSVTVDGVTTDIGLVGDVERVNAAAVLDLIAARRIPVVSTLAPDAEGVVHNINADTAAAALAEALGAEKLLMLTDVEGLYTSWPNRDSLVSEIDTATLSQLLPTLEAGMIPKVEACLRAVSAGVPSAHVIDGRVEHCVLVELFTDEGTGTKVVSS.

Residues 70–71, arginine 92, and asparagine 191 each bind substrate; that span reads GG.

It belongs to the acetylglutamate kinase family. ArgB subfamily.

It localises to the cytoplasm. It catalyses the reaction N-acetyl-L-glutamate + ATP = N-acetyl-L-glutamyl 5-phosphate + ADP. Its pathway is amino-acid biosynthesis; L-arginine biosynthesis; N(2)-acetyl-L-ornithine from L-glutamate: step 2/4. Functionally, catalyzes the ATP-dependent phosphorylation of N-acetyl-L-glutamate. The sequence is that of Acetylglutamate kinase from Mycolicibacterium paratuberculosis (strain ATCC BAA-968 / K-10) (Mycobacterium paratuberculosis).